We begin with the raw amino-acid sequence, 289 residues long: Thioredoxin-like protein 1 (289 aa).

The Thioredoxin domain occupies Val2–Asn109. Cys34 and Cys37 form a disulfide bridge. At Ser113 the chain carries Phosphoserine. A PITH domain is found at Glu115–Lys285.

In terms of assembly, component of the 19S regulatory cap of the 26S proteasome. Interacts with PSMD14/RPN11. Interacts with, and reduces EEF1A1.

It is found in the cytoplasm. Its subcellular location is the nucleus. Functionally, active thioredoxin with a redox potential of about -250 mV. The chain is Thioredoxin-like protein 1 (Txnl1) from Mus musculus (Mouse).